The following is a 319-amino-acid chain: MKSKELNLHTLYTQHSRESWAGFGGHLSIAVSEEEAKAVEGLNDYLSVEEVETIYIPLVRLLHLHVTSAARRNQHVNVFLKHPHSAKIPFIIGIAGSVAVGKSTTARILQKLLSRLPDRPKVSLVTTDGFLYPTAELKRKNLLSRKGFPESYDVKALLEFLNDIKSGKERVEAPVYSHLTYDREEGAVEVVEGADIVIIEGINVLQSPTLEDDREDPRIFVSDFFDFSIYVDAEESRIFTWYLERFRLLRETAFQDPASYFHKFKDLSDAEADTMAASIWESVNRPNLYENILPTKFRSDLILRKGDGHKVEEVLVRRV.

96–103 (GSVAVGKS) is a binding site for ATP.

This sequence belongs to the prokaryotic pantothenate kinase family.

It localises to the cytoplasm. It carries out the reaction (R)-pantothenate + ATP = (R)-4'-phosphopantothenate + ADP + H(+). It participates in cofactor biosynthesis; coenzyme A biosynthesis; CoA from (R)-pantothenate: step 1/5. The sequence is that of Pantothenate kinase from Bacillus velezensis (strain DSM 23117 / BGSC 10A6 / LMG 26770 / FZB42) (Bacillus amyloliquefaciens subsp. plantarum).